A 58-amino-acid polypeptide reads, in one-letter code: NADH dehydrogenase [ubiquinone] 1 beta subcomplex subunit 1 (58 aa).

The helical transmembrane segment at 11 to 27 (HWVHVLVPMGFVIGCYL) threads the bilayer.

It belongs to the complex I NDUFB1 subunit family. In terms of assembly, complex I is composed of 45 different subunits.

It is found in the mitochondrion inner membrane. Its function is as follows. Accessory subunit of the mitochondrial membrane respiratory chain NADH dehydrogenase (Complex I) that is believed not to be involved in catalysis. Complex I functions in the transfer of electrons from NADH to the respiratory chain. The immediate electron acceptor for the enzyme is believed to be ubiquinone. The polypeptide is NADH dehydrogenase [ubiquinone] 1 beta subcomplex subunit 1 (NDUFB1) (Homo sapiens (Human)).